A 187-amino-acid chain; its full sequence is MAIGMSELKKGLKIEIDGIPYRITEYQHVKPGKGAAFVRAKIKSFLDGKVIEKTFHAGDKCEEPNLQEKTMQFLYHDGGAFQFMDTTTYEQIALSDDQVGDVAKWIIDGLNVQILFHNEKAISVDVPLVVELTITETAPNFKGDTSSGGKKPATLETGAVVQVPFHVLEGEKIKVNTETGEYLEKVK.

The protein belongs to the elongation factor P family.

Its subcellular location is the cytoplasm. It functions in the pathway protein biosynthesis; polypeptide chain elongation. In terms of biological role, involved in peptide bond synthesis. Stimulates efficient translation and peptide-bond synthesis on native or reconstituted 70S ribosomes in vitro. Probably functions indirectly by altering the affinity of the ribosome for aminoacyl-tRNA, thus increasing their reactivity as acceptors for peptidyl transferase. In Helicobacter hepaticus (strain ATCC 51449 / 3B1), this protein is Elongation factor P.